The primary structure comprises 363 residues: 3-dehydroquinate synthase (363 aa).

NAD(+) contacts are provided by residues 134–135, Lys-147, and Lys-156; that span reads TT. Zn(2+)-binding residues include Glu-189, His-254, and His-271.

Belongs to the sugar phosphate cyclases superfamily. Dehydroquinate synthase family. Co(2+) is required as a cofactor. It depends on Zn(2+) as a cofactor. NAD(+) serves as cofactor.

It is found in the cytoplasm. It carries out the reaction 7-phospho-2-dehydro-3-deoxy-D-arabino-heptonate = 3-dehydroquinate + phosphate. Its pathway is metabolic intermediate biosynthesis; chorismate biosynthesis; chorismate from D-erythrose 4-phosphate and phosphoenolpyruvate: step 2/7. Its function is as follows. Catalyzes the conversion of 3-deoxy-D-arabino-heptulosonate 7-phosphate (DAHP) to dehydroquinate (DHQ). This chain is 3-dehydroquinate synthase, found in Prochlorococcus marinus (strain AS9601).